A 277-amino-acid polypeptide reads, in one-letter code: MAAPVVTMQNLIEAGAHFGHQTHRWNPRMKPYIFGARNGIHILDLSQTVPLFARALDFIASTAASGGKVLFVGTKRQAQGPIADAARASGQHFVNHRWLGGMLTNWKTISNSIKRLKTLEEQLSGDTSGLTKKEVLNKTRERDKLEMSLGGIRDMGGIPDVMFVIDANKEELAIKEANVLGIPVVAILDSNVSPDGIAFPVPANDDAARAIRLYCDAVAQAATRGGQQARADRGEDLGAAVEPVAEPALVEEAAAPVTEDEQVPAEAAAETERQSDA.

A disordered region spans residues 226 to 277 (GQQARADRGEDLGAAVEPVAEPALVEEAAAPVTEDEQVPAEAAAETERQSDA). A compositionally biased stretch (low complexity) spans 239–257 (AAVEPVAEPALVEEAAAPV).

Belongs to the universal ribosomal protein uS2 family.

The chain is Small ribosomal subunit protein uS2 from Sphingopyxis alaskensis (strain DSM 13593 / LMG 18877 / RB2256) (Sphingomonas alaskensis).